A 565-amino-acid polypeptide reads, in one-letter code: Adenine deaminase (565 aa).

It belongs to the metallo-dependent hydrolases superfamily. Adenine deaminase family. It depends on Mn(2+) as a cofactor.

The enzyme catalyses adenine + H2O + H(+) = hypoxanthine + NH4(+). The chain is Adenine deaminase from Sinorhizobium fredii (strain NBRC 101917 / NGR234).